We begin with the raw amino-acid sequence, 224 residues long: dTTP/UTP pyrophosphatase (224 aa).

Residue aspartate 77 is the Proton acceptor of the active site.

Belongs to the Maf family. YhdE subfamily. A divalent metal cation is required as a cofactor.

It localises to the cytoplasm. It catalyses the reaction dTTP + H2O = dTMP + diphosphate + H(+). It carries out the reaction UTP + H2O = UMP + diphosphate + H(+). In terms of biological role, nucleoside triphosphate pyrophosphatase that hydrolyzes dTTP and UTP. May have a dual role in cell division arrest and in preventing the incorporation of modified nucleotides into cellular nucleic acids. This chain is dTTP/UTP pyrophosphatase, found in Dehalococcoides mccartyi (strain ATCC BAA-2100 / JCM 16839 / KCTC 5957 / BAV1).